The sequence spans 95 residues: Lipolysis-activating peptide 1-beta chain (95 aa).

The first 22 residues, 1 to 22, serve as a signal peptide directing secretion; the sequence is MISVQVIFIAFISIIAFSMVCG. Residues 23-91 form the LCN-type CS-alpha/beta domain; it reads GNVFPNRELG…FLNALEKQCP (69 aa). Cystine bridges form between Cys37/Cys60, Cys45/Cys70, and Cys49/Cys72.

In terms of assembly, homodimer; disulfide-linked or monomer (edited version) or heterodimer of an alpha chain (AC P84810) and this beta chain (non-edited version). As to expression, expressed by the venom gland.

It is found in the secreted. The homodimer inhibits HMG-CoA reductase (HMGCR) (32% of inhibition produced by 0.6 uM), a glycoprotein involved in the control of cholesterol biosynthesis. The inhibitory effects of bumarsin are seen at much lower concentrations (0.6 uM) than that for statins such as atorvastatin (5 mM) and simvastatin (10 uM). In addition to inhibition of HMG-CoA reductase, this protein lowers cholesterol levels by inducing steroid hormone synthesis via StAR, and by increasing reverse cholesterol transport mediated by the induction of ABCA1 and APOA1. Its function is as follows. The heterodimer non-edited LVP1 induces lipolysis in rat adipocytes. Induction of lipolysis by LVP1 appears to be mediated through the beta-2 adrenergic receptor pathway (ADRB2). Intracerebroventricular injection is not toxic to mice. In terms of biological role, the monomer edited version, similar to alpha-toxins, may modulate voltage-gated sodium channels (Nav) and may block voltage-gated potassium channels (Kv). This is Lipolysis-activating peptide 1-beta chain from Buthus occitanus tunetanus (Common European scorpion).